The chain runs to 301 residues: Probable alpha-L-glutamate ligase (301 aa).

The region spanning 104–287 (LQLLSRKGIG…VADMIFEFIE (184 aa)) is the ATP-grasp domain. ATP is bound by residues K141, 178 to 179 (EF), D187, and 211 to 213 (RSN). 3 residues coordinate Mg(2+): D248, E260, and N262. Mn(2+) contacts are provided by D248, E260, and N262.

Belongs to the RimK family. Mg(2+) serves as cofactor. Requires Mn(2+) as cofactor.

In Vibrio atlanticus (strain LGP32) (Vibrio splendidus (strain Mel32)), this protein is Probable alpha-L-glutamate ligase.